The primary structure comprises 98 residues: Aspartyl/glutamyl-tRNA(Asn/Gln) amidotransferase subunit C (98 aa).

Belongs to the GatC family. In terms of assembly, heterotrimer of A, B and C subunits.

The catalysed reaction is L-glutamyl-tRNA(Gln) + L-glutamine + ATP + H2O = L-glutaminyl-tRNA(Gln) + L-glutamate + ADP + phosphate + H(+). The enzyme catalyses L-aspartyl-tRNA(Asn) + L-glutamine + ATP + H2O = L-asparaginyl-tRNA(Asn) + L-glutamate + ADP + phosphate + 2 H(+). Allows the formation of correctly charged Asn-tRNA(Asn) or Gln-tRNA(Gln) through the transamidation of misacylated Asp-tRNA(Asn) or Glu-tRNA(Gln) in organisms which lack either or both of asparaginyl-tRNA or glutaminyl-tRNA synthetases. The reaction takes place in the presence of glutamine and ATP through an activated phospho-Asp-tRNA(Asn) or phospho-Glu-tRNA(Gln). This chain is Aspartyl/glutamyl-tRNA(Asn/Gln) amidotransferase subunit C, found in Arthrobacter sp. (strain FB24).